A 152-amino-acid polypeptide reads, in one-letter code: Superoxide dismutase [Cu-Zn] 4AP (152 aa).

Cu cation is bound by residues His45, His47, and His62. Cys56 and Cys145 form a disulfide bridge. The Zn(2+) site is built by His62, His70, His79, and Asp82. His119 provides a ligand contact to Cu cation.

The protein belongs to the Cu-Zn superoxide dismutase family. In terms of assembly, homodimer. Requires Cu cation as cofactor. Zn(2+) serves as cofactor.

It is found in the cytoplasm. The enzyme catalyses 2 superoxide + 2 H(+) = H2O2 + O2. Destroys radicals which are normally produced within the cells and which are toxic to biological systems. This is Superoxide dismutase [Cu-Zn] 4AP (SODCC.2) from Zea mays (Maize).